A 447-amino-acid chain; its full sequence is N-succinylarginine dihydrolase (447 aa).

Substrate contacts are provided by residues 19-28 (AGLSFGNEAS), Asn-110, and 137-138 (HR). The active site involves Glu-174. Residue Arg-212 participates in substrate binding. The active site involves His-248. Substrate-binding residues include Asp-250 and Asn-359. Cys-365 serves as the catalytic Nucleophile.

Belongs to the succinylarginine dihydrolase family. In terms of assembly, homodimer.

It catalyses the reaction N(2)-succinyl-L-arginine + 2 H2O + 2 H(+) = N(2)-succinyl-L-ornithine + 2 NH4(+) + CO2. The protein operates within amino-acid degradation; L-arginine degradation via AST pathway; L-glutamate and succinate from L-arginine: step 2/5. Functionally, catalyzes the hydrolysis of N(2)-succinylarginine into N(2)-succinylornithine, ammonia and CO(2). The chain is N-succinylarginine dihydrolase from Salmonella schwarzengrund (strain CVM19633).